The primary structure comprises 734 residues: Polyribonucleotide nucleotidyltransferase (734 aa).

Mg(2+) contacts are provided by D503 and D509. The KH domain maps to 570–629; the sequence is PKLSTIQVPVDAIGMIIGKGGETIRSITEETGAQINVDDDGTVTISSPNGESAAAAIETI. One can recognise an S1 motif domain in the interval 639-713; that stretch reads GTIYMGKVKD…GKIRYALSIK (75 aa).

This sequence belongs to the polyribonucleotide nucleotidyltransferase family. Requires Mg(2+) as cofactor.

The protein localises to the cytoplasm. The catalysed reaction is RNA(n+1) + phosphate = RNA(n) + a ribonucleoside 5'-diphosphate. Functionally, involved in mRNA degradation. Catalyzes the phosphorolysis of single-stranded polyribonucleotides processively in the 3'- to 5'-direction. This Chlorobium phaeobacteroides (strain BS1) protein is Polyribonucleotide nucleotidyltransferase.